The following is a 215-amino-acid chain: Probable transaldolase (215 aa).

K83 functions as the Schiff-base intermediate with substrate in the catalytic mechanism.

The protein belongs to the transaldolase family. Type 3B subfamily.

Its subcellular location is the cytoplasm. The enzyme catalyses D-sedoheptulose 7-phosphate + D-glyceraldehyde 3-phosphate = D-erythrose 4-phosphate + beta-D-fructose 6-phosphate. Its pathway is carbohydrate degradation; pentose phosphate pathway; D-glyceraldehyde 3-phosphate and beta-D-fructose 6-phosphate from D-ribose 5-phosphate and D-xylulose 5-phosphate (non-oxidative stage): step 2/3. Functionally, transaldolase is important for the balance of metabolites in the pentose-phosphate pathway. The sequence is that of Probable transaldolase from Clostridium kluyveri (strain NBRC 12016).